The sequence spans 689 residues: Glycine--tRNA ligase beta subunit (689 aa).

It belongs to the class-II aminoacyl-tRNA synthetase family. As to quaternary structure, tetramer of two alpha and two beta subunits.

It localises to the cytoplasm. It catalyses the reaction tRNA(Gly) + glycine + ATP = glycyl-tRNA(Gly) + AMP + diphosphate. The protein is Glycine--tRNA ligase beta subunit of Citrobacter koseri (strain ATCC BAA-895 / CDC 4225-83 / SGSC4696).